The primary structure comprises 171 residues: Histone H1, gonadal (171 aa).

2 disordered regions span residues 1 to 40 and 133 to 171; these read AASP…AHPP and AKAK…KAKP. The segment covering 9–35 has biased composition (basic residues); it reads ASPRKSPKKSPRKSPKKKSPRKRKARS. An H15 domain is found at 37–111; sequence AHPPVIDMIT…GATGRFRVGA (75 aa).

The protein belongs to the histone H1/H5 family. Sperm.

It is found in the nucleus. Its subcellular location is the chromosome. Histones H1 are necessary for the condensation of nucleosome chains into higher-order structures. This is Histone H1, gonadal from Echinolampas crassa (Sea urchin).